Reading from the N-terminus, the 94-residue chain is Pyrimidine/purine nucleoside phosphorylase (94 aa).

It belongs to the nucleoside phosphorylase PpnP family.

The catalysed reaction is a purine D-ribonucleoside + phosphate = a purine nucleobase + alpha-D-ribose 1-phosphate. The enzyme catalyses adenosine + phosphate = alpha-D-ribose 1-phosphate + adenine. It carries out the reaction cytidine + phosphate = cytosine + alpha-D-ribose 1-phosphate. It catalyses the reaction guanosine + phosphate = alpha-D-ribose 1-phosphate + guanine. The catalysed reaction is inosine + phosphate = alpha-D-ribose 1-phosphate + hypoxanthine. The enzyme catalyses thymidine + phosphate = 2-deoxy-alpha-D-ribose 1-phosphate + thymine. It carries out the reaction uridine + phosphate = alpha-D-ribose 1-phosphate + uracil. It catalyses the reaction xanthosine + phosphate = alpha-D-ribose 1-phosphate + xanthine. Functionally, catalyzes the phosphorolysis of diverse nucleosides, yielding D-ribose 1-phosphate and the respective free bases. Can use uridine, adenosine, guanosine, cytidine, thymidine, inosine and xanthosine as substrates. Also catalyzes the reverse reactions. This chain is Pyrimidine/purine nucleoside phosphorylase, found in Vibrio parahaemolyticus serotype O3:K6 (strain RIMD 2210633).